The sequence spans 147 residues: Protein-export protein SecB 2 (147 aa).

The protein belongs to the SecB family. In terms of assembly, homotetramer, a dimer of dimers. One homotetramer interacts with 1 SecA dimer.

It localises to the cytoplasm. Its function is as follows. One of the proteins required for the normal export of preproteins out of the cell cytoplasm. It is a molecular chaperone that binds to a subset of precursor proteins, maintaining them in a translocation-competent state. It also specifically binds to its receptor SecA. The chain is Protein-export protein SecB 2 from Francisella tularensis subsp. novicida (strain U112).